A 178-amino-acid polypeptide reads, in one-letter code: Large ribosomal subunit protein uL6c (178 aa).

Belongs to the universal ribosomal protein uL6 family. Part of the 50S ribosomal subunit.

It is found in the plastid. The protein resides in the chloroplast. Functionally, binds 23S rRNA. The sequence is that of Large ribosomal subunit protein uL6c (rpl6) from Phaeodactylum tricornutum (strain CCAP 1055/1).